Here is a 122-residue protein sequence, read N- to C-terminus: Large ribosomal subunit protein uL14 (122 aa).

Belongs to the universal ribosomal protein uL14 family. In terms of assembly, part of the 50S ribosomal subunit. Forms a cluster with proteins L3 and L19. In the 70S ribosome, L14 and L19 interact and together make contacts with the 16S rRNA in bridges B5 and B8.

In terms of biological role, binds to 23S rRNA. Forms part of two intersubunit bridges in the 70S ribosome. The protein is Large ribosomal subunit protein uL14 of Frankia alni (strain DSM 45986 / CECT 9034 / ACN14a).